The sequence spans 122 residues: Phospholipase A2 homolog ECS_00014 (122 aa).

7 cysteine pairs are disulfide-bonded: C26/C115, C28/C44, C43/C95, C49/C122, C50/C88, C57/C81, and C75/C86. Residues 105-117 (KKYTYYPNFWCKG) are important for membrane-damaging activities in eukaryotes and bacteria; heparin-binding.

The protein belongs to the phospholipase A2 family. Group II subfamily. S49 sub-subfamily. As to quaternary structure, monomer. Expressed by the venom gland.

Its subcellular location is the secreted. Functionally, snake venom phospholipase A2 homolog that lacks enzymatic activity. Shows high myotoxin activities and displays edema-inducing activities. Has cytotoxic activities against HUVEC cells (LC(50)=12.2 uL) and human lung adenocarcinoma A549 cells (LC(50)=8.5 uL). This is Phospholipase A2 homolog ECS_00014 from Echis carinatus sochureki (Saw-scaled viper).